We begin with the raw amino-acid sequence, 97 residues long: Signal recognition particle 19 kDa protein (97 aa).

It belongs to the SRP19 family. As to quaternary structure, part of the signal recognition particle protein translocation system, which is composed of SRP and FtsY. Archaeal SRP consists of a 7S RNA molecule of 300 nucleotides and two protein subunits: SRP54 and SRP19.

The protein resides in the cytoplasm. In terms of biological role, involved in targeting and insertion of nascent membrane proteins into the cytoplasmic membrane. Binds directly to 7S RNA and mediates binding of the 54 kDa subunit of the SRP. The sequence is that of Signal recognition particle 19 kDa protein from Pyrobaculum calidifontis (strain DSM 21063 / JCM 11548 / VA1).